A 1324-amino-acid polypeptide reads, in one-letter code: MAPSRRQISGRSPLVNQQRQITSFFGKSASSSSSPSPSPSPSLSNKKTPKSNNPNPKSPSPSPSPPKKTPKLNPNPSSNLPARSPSPGPDTPSPVQSKFKKPLLVIGQTPSPPQSVVITYGDEVVGKQVRVYWPLDKKWYDGSVTFYDKGEGKHVVEYEDGEEESLDLGKEKTEWVVGEKSGDRFNRLKRGASALRKVVTDSDDDVEMGNVEEDKSDGDDSSDEDWGKNVGKEVCESEEDDVELVDENEMDEEELVEEKDEETSKVNRVSKTDSRKRKTSEVTKSGGEKKSKTDTGTILKGFKASVVEPAKKIGQADRVVKGLEDNVLDGDALARFGARDSEKFRFLGVDRRDAKRRRPTDENYDPRTLYLPPDFVKKLTGGQRQWWEFKAKHMDKVVFFKMGKFYELFEMDAHVGAKELDIQYMKGEQPHCGFPEKNFSVNIEKLVRKGYRVLVVEQTETPDQLEQRRKETGSKDKVVKREVCAVVTKGTLTDGEMLLTNPDASYLMALTEGGESLTNPTAEHNFGVCLVDVATQKIILGQFKDDQDCSALSCLLSEMRPVEIIKPAKVLSYATERTIVRQTRNPLVNNLVPLSEFWDSEKTIYEVGIIYKRINCQPSSAYSSEGKILGDGSSFLPKMLSELATEDKNGSLALSALGGAIYYLRQAFLDESLLRFAKFESLPYCDFSNVNEKQHMVLDAAALENLEIFENSRNGGYSGTLYAQLNQCITASGKRLLKTWLARPLYNTELIKERQDAVAILRGENLPYSLEFRKSLSRLPDMERLIARMFSSIEASGRNGDKVVLYEDTAKKQVQEFISTLRGCETMAEACSSLRAILKHDTSRRLLHLLTPGQSLPNISSSIKYFKDAFDWVEAHNSGRVIPHEGADEEYDCACKTVEEFESSLKKHLKEQRKLLGDASINYVTVGKDEYLLEVPESLSGSVPHDYELCSSKKGVSRYWTPTIKKLLKELSQAKSEKESALKSISQRLIGRFCEHQEKWRQLVSATAELDVLISLAFASDSYEGVRCRPVISGSTSDGVPHLSATGLGHPVLRGDSLGRGSFVPNNVKIGGAEKASFILLTGPNMGGKSTLLRQVCLAVILAQIGADVPAETFEVSPVDKICVRMGAKDHIMAGQSTFLTELSETAVMLTSATRNSLVVLDELGRGTATSDGQAIAESVLEHFIEKVQCRGFFSTHYHRLSVDYQTNPKVSLCHMACQIGEGIGGVEEVTFLYRLTPGACPKSYGVNVARLAGLPDYVLQRAVIKSQEFEALYGKNHRKTDHKLAAMIKQIISSVASDSDYSASKDSLCELHSMANTFLRLTN.

The segment covering 1–25 (MAPSRRQISGRSPLVNQQRQITSFF) has biased composition (polar residues). 2 disordered regions span residues 1–114 (MAPS…SPPQ) and 197–294 (KVVT…SKTD). A compositionally biased stretch (low complexity) spans 27-55 (KSASSSSSPSPSPSPSLSNKKTPKSNNPN). Positions 56-67 (PKSPSPSPSPPK) are enriched in pro residues. A compositionally biased stretch (low complexity) spans 71-83 (KLNPNPSSNLPAR). Over residues 201–224 (DSDDDVEMGNVEEDKSDGDDSSDE) the composition is skewed to acidic residues. Basic and acidic residues predominate over residues 225-235 (DWGKNVGKEVC). Acidic residues predominate over residues 236–261 (ESEEDDVELVDENEMDEEELVEEKDE). The span at 262 to 273 (ETSKVNRVSKTD) shows a compositional bias: basic and acidic residues. ATP is bound at residue 1083–1090 (GPNMGGKS).

It belongs to the DNA mismatch repair MutS family. In terms of assembly, heterodimer consisting of MSH2-MSH6 (MutS alpha).

The protein resides in the nucleus. Its function is as follows. Component of the post-replicative DNA mismatch repair system (MMR). Forms the heterodimer MutS alpha (MSH2-MSH6 heterodimer) which binds to DNA mismatches thereby initiating DNA repair. MutS alpha recognizes single base mismatches and trinucleotide insertion-deletion loops (IDL) in the DNA. Is involved in a UV-B-induced DNA damage response pathway. This is DNA mismatch repair protein MSH6 (MSH6) from Arabidopsis thaliana (Mouse-ear cress).